The sequence spans 697 residues: MERSTNARHSTLSSWTRESNTLSVLSKDVSLEDAKEYWKDCQADGKVDWIFEKLLNKLKILWQKIKDGSATNLEYVRAVILVNEAEQLEEDTETLHTDIQKENKVQENTDCAPERKEDSCADLNSDCETDVSGSECEHEDHSTVSPPATGAVCFGKHLCGPSCLSDINPSLLKKENPLNLPVSCDFQRWRVKTNGSEYPPHILYKAPCGRSLRDSDEVHSYLTETGCHFLGVDNFSFSTQVQLESHLSIKQEIVQDCDISNDVESVPVSLSNEIDDTRPTNFIYRKTSWPPGYSINNFTDIFVKCCSCTDGCLDISTCSCLQLTAQAFEKFTDSSLGIGPLGYKHKRLQEPVPTGLYECNLSCKCDRTLCQNRVVQHGLQLRLQVFKTDTKGWGVRCLDDVDNGTFVCIYAGRILIRTADSSVKTTLEDSVACGNEAKEDNGSTSTLMLSKRKRKPSHSDSEVTVMHLTPYSMRSLGLSVHRQSNTLSLTHLRSGGREISLEPFRRPKTKTSMLQKRRRQLIEEGACTVHNSSEEEGPTPPQSPKQKFNAGRKIHRNENSDETASGYVSEESSSSVISGGHPSEKPTCRTKSKLNKMTPHLSTSPEQTCEEDLHFLDASKEGNVGRFLNHSCCPNLFVQHVFVDTHQKSFPWVAFFTNSVVKAGTELTWDYNYVIGTAPDQEIQCLCGQQTCKHKIV.

The MBD domain occupies 172-242; that stretch reads LKKENPLNLP…DNFSFSTQVQ (71 aa). The 75-residue stretch at 304 to 378 folds into the Pre-SET domain; it reads KCCSCTDGCL…LCQNRVVQHG (75 aa). Zn(2+)-binding residues include Cys306, Cys308, Cys312, Cys318, Cys320, Cys359, Cys363, Cys365, and Cys370. The region spanning 381-672 is the SET domain; it reads LRLQVFKTDT…AGTELTWDYN (292 aa). Residue 391-393 participates in S-adenosyl-L-methionine binding; it reads KGW. Disordered regions lie at residues 438–461 and 529–605; these read KEDNGSTSTLMLSKRKRKPSHSDS and VHNS…STSP. Over residues 565–581 the composition is skewed to low complexity; that stretch reads SGYVSEESSSSVISGGH. Residues Arg626 and 629–630 contribute to the S-adenosyl-L-methionine site; that span reads NH. Zn(2+)-binding residues include Cys632, Cys685, Cys687, and Cys692.

It belongs to the class V-like SAM-binding methyltransferase superfamily.

Its subcellular location is the nucleus. The protein resides in the chromosome. It catalyses the reaction N(6),N(6)-dimethyl-L-lysyl(9)-[histone H3] + S-adenosyl-L-methionine = N(6),N(6),N(6)-trimethyl-L-lysyl(9)-[histone H3] + S-adenosyl-L-homocysteine + H(+). In terms of biological role, histone methyltransferase involved in left-right axis specification in early development and mitosis. Specifically trimethylates 'Lys-9' of histone H3 (H3K9me3). H3K9me3 represents a specific tag for epigenetic transcriptional repression by recruiting HP1 (CBX1, CBX3 and/or CBX5) proteins to methylated histones. Contributes to H3K9me3 in both the interspersed repetitive elements and centromere-associated repeats. Plays a role in chromosome condensation and segregation during mitosis. The sequence is that of Histone-lysine N-methyltransferase SETDB2 (setdb2) from Xenopus tropicalis (Western clawed frog).